A 273-amino-acid polypeptide reads, in one-letter code: Putative carboxypeptidase YodJ (273 aa).

Residues 1–23 form the signal peptide; that stretch reads MKKSGKWFSLAAALSVTAIVGAG. Cys24 carries the N-palmitoyl cysteine lipid modification. A lipid anchor (S-diacylglycerol cysteine) is attached at Cys24. The segment at 27-58 is disordered; sequence SNGDAQKDTKTTAETKQTEQKTADSKKSNTQN. Residues 31-53 show a composition bias toward basic and acidic residues; the sequence is AQKDTKTTAETKQTEQKTADSKK.

It belongs to the peptidase M15B family.

It is found in the cell membrane. The protein is Putative carboxypeptidase YodJ (yodJ) of Bacillus subtilis (strain 168).